Reading from the N-terminus, the 308-residue chain is Aspartate carbamoyltransferase catalytic subunit (308 aa).

The carbamoyl phosphate site is built by Arg57 and Thr58. Lys86 is a binding site for L-aspartate. Residues Arg107, His135, and Gln138 each contribute to the carbamoyl phosphate site. L-aspartate is bound by residues Arg167 and Arg228. Carbamoyl phosphate contacts are provided by Leu267 and Pro268.

It belongs to the aspartate/ornithine carbamoyltransferase superfamily. ATCase family. As to quaternary structure, heterooligomer of catalytic and regulatory chains.

It carries out the reaction carbamoyl phosphate + L-aspartate = N-carbamoyl-L-aspartate + phosphate + H(+). It participates in pyrimidine metabolism; UMP biosynthesis via de novo pathway; (S)-dihydroorotate from bicarbonate: step 2/3. Its function is as follows. Catalyzes the condensation of carbamoyl phosphate and aspartate to form carbamoyl aspartate and inorganic phosphate, the committed step in the de novo pyrimidine nucleotide biosynthesis pathway. This chain is Aspartate carbamoyltransferase catalytic subunit, found in Methanococcoides burtonii (strain DSM 6242 / NBRC 107633 / OCM 468 / ACE-M).